Consider the following 88-residue polypeptide: Putative sulfur carrier protein AF_0552 (88 aa).

The protein belongs to the sulfur carrier protein CysO family.

The sequence is that of Putative sulfur carrier protein AF_0552 from Archaeoglobus fulgidus (strain ATCC 49558 / DSM 4304 / JCM 9628 / NBRC 100126 / VC-16).